The sequence spans 141 residues: MSIVIGADAAGLRLKEVVKDFLEKENFHLVDVTAEGQDFVDVTLAVAAEVNKEEQNLGIVIDAYGAGSFMVATKIKGMVAAEVSDERSAYMTRGHNNSRMITMGAQLVGDELAKNIAKGFVNGKYDGGRHQIRVDMLNKMG.

This sequence belongs to the LacAB/RpiB family. In terms of assembly, heteromultimeric protein consisting of LacA and LacB.

It carries out the reaction aldehydo-D-galactose 6-phosphate = keto-D-tagatose 6-phosphate. It participates in carbohydrate metabolism; D-galactose 6-phosphate degradation; D-tagatose 6-phosphate from D-galactose 6-phosphate: step 1/1. The protein is Galactose-6-phosphate isomerase subunit LacA of Streptococcus pneumoniae (strain ATCC 700669 / Spain 23F-1).